We begin with the raw amino-acid sequence, 84 residues long: Large ribosomal subunit protein bL27 (84 aa).

Polar residues predominate over residues 1-11 (MATTKAGGSTK). Positions 1-20 (MATTKAGGSTKNGRDSHSKR) are disordered.

Belongs to the bacterial ribosomal protein bL27 family.

The polypeptide is Large ribosomal subunit protein bL27 (Mycoplasmopsis synoviae (strain 53) (Mycoplasma synoviae)).